The following is a 363-amino-acid chain: Endopolygalacturonase B (363 aa).

A signal peptide spans 1–20 (MQLLQSSVIAATVGAALVAA). A propeptide spanning residues 21–28 (VPVELKAR) is cleaved from the precursor. Cysteines 31 and 46 form a disulfide. PbH1 repeat units lie at residues 158-187 (SDNLNITDVTIDNSAGTAEGHNTDAFDVGS), 188-209 (STYINIDGATVYNQDDCLAINS), 210-230 (GSHITFTNGYCDGGHGLSIGS), 239-260 (VEDVTISNSKVVNSQNGVRIKT), 268-290 (VSNVKFEDITLSGITKYGLIVEQ), and 302-347 (TNGI…SITG). N-linked (GlcNAc...) asparagine glycosylation occurs at Asn-162. The active-site Proton donor is Asp-202. Cys-204 and Cys-220 are oxidised to a cystine. Residue His-224 is part of the active site. Disulfide bonds link Cys-330/Cys-335 and Cys-354/Cys-363. Asn-356 is a glycosylation site (N-linked (GlcNAc...) asparagine).

Belongs to the glycosyl hydrolase 28 family.

The protein localises to the secreted. The enzyme catalyses (1,4-alpha-D-galacturonosyl)n+m + H2O = (1,4-alpha-D-galacturonosyl)n + (1,4-alpha-D-galacturonosyl)m.. In terms of biological role, involved in maceration and soft-rotting of plant tissue. Hydrolyzes the 1,4-alpha glycosidic bonds of de-esterified pectate in the smooth region of the plant cell wall. This chain is Endopolygalacturonase B (pgaB), found in Aspergillus oryzae (strain ATCC 42149 / RIB 40) (Yellow koji mold).